Reading from the N-terminus, the 281-residue chain is 1-acyl-sn-glycerol-3-phosphate acyltransferase (281 aa).

3 helical membrane passes run 40–60, 71–91, and 110–130; these read IFVC…IMVL, LGNL…GIPI, and ASPI…VGVA. The HXXXXD motif motif lies at 109 to 114; sequence HASPID.

The protein belongs to the 1-acyl-sn-glycerol-3-phosphate acyltransferase family.

The protein resides in the membrane. The enzyme catalyses a 1-acyl-sn-glycero-3-phosphate + an acyl-CoA = a 1,2-diacyl-sn-glycero-3-phosphate + CoA. It functions in the pathway phospholipid metabolism; CDP-diacylglycerol biosynthesis; CDP-diacylglycerol from sn-glycerol 3-phosphate: step 2/3. Functionally, converts lysophosphatidic acid (LPA) into phosphatidic acid by incorporating acyl moiety at the 2 position. This enzyme uses erucoyl-CoA as an acyl donor. The polypeptide is 1-acyl-sn-glycerol-3-phosphate acyltransferase (Limnanthes alba (White meadowfoam)).